We begin with the raw amino-acid sequence, 439 residues long: FBD-associated F-box protein At5g56380 (439 aa).

Residues 1–61 (MDRISHLADE…LPETWGYQEP (61 aa)) enclose the F-box domain. Residues 358–406 (WNQPGSVPRCLSSSLETLEWVEYGGTHEEKELSTYLFKTAVCFKKASFT) enclose the FBD domain.

This is FBD-associated F-box protein At5g56380 from Arabidopsis thaliana (Mouse-ear cress).